A 300-amino-acid polypeptide reads, in one-letter code: Tyrosine recombinase XerC (300 aa).

Residues 4-90 (VALSLDVSRF…ALRSFFDWLV (87 aa)) form the Core-binding (CB) domain. Positions 111-290 (HLPKNIDVDD…DFQHLASVYD (180 aa)) constitute a Tyr recombinase domain. Active-site residues include R150, K174, H242, R245, and H268. Y277 functions as the O-(3'-phospho-DNA)-tyrosine intermediate in the catalytic mechanism.

The protein belongs to the 'phage' integrase family. XerC subfamily. In terms of assembly, forms a cyclic heterotetrameric complex composed of two molecules of XerC and two molecules of XerD, in which XerC interacts with XerD via its C-terminal region, XerD interacts with XerC via its C-terminal region and so on.

It is found in the cytoplasm. With respect to regulation, ftsK may regulate the catalytic switch between XerC and XerD in the heterotetrameric complex during the two steps of the recombination process. Functionally, site-specific tyrosine recombinase, which acts by catalyzing the cutting and rejoining of the recombining DNA molecules. Binds cooperatively to specific DNA consensus sequences that are separated from XerD binding sites by a short central region, forming the heterotetrameric XerC-XerD complex that recombines DNA substrates. The complex is essential to convert dimers of the bacterial chromosome into monomers to permit their segregation at cell division. It also contributes to the segregational stability of plasmids. In the complex XerC specifically exchanges the top DNA strands. This chain is Tyrosine recombinase XerC, found in Salmonella typhi.